The sequence spans 673 residues: Cyclic nucleotide-binding domain-containing protein 2 (673 aa).

Polar residues predominate over residues 1–15; it reads MNRSANPEAASSTSH. The tract at residues 1–89 is disordered; sequence MNRSANPEAA…PQPKDRPGVQ (89 aa). Positions 43–86 are enriched in basic and acidic residues; that stretch reads PADKSDTTESKSESGSDSRSEEDKESPASIKEIKAETPQPKDRP. 206–329 lines the a nucleoside 3',5'-cyclic phosphate pocket; sequence CYRSYTESLQ…ETQYRYNFFR (124 aa).

As to expression, testis-specific. Exclusively expressed in testicular germ cells while it is not present in mature sperm (at protein level).

The protein localises to the cytoplasm. Its subcellular location is the cytosol. Functionally, essential for male fertility. Plays an important role in spermatogenesis and regulates sperm motility by controlling the development of the flagellar bending of sperm. The polypeptide is Cyclic nucleotide-binding domain-containing protein 2 (Cnbd2) (Mus musculus (Mouse)).